The chain runs to 361 residues: Phospho-N-acetylmuramoyl-pentapeptide-transferase (361 aa).

10 consecutive transmembrane segments (helical) span residues 25 to 45 (TGGAMVTGALFVFLCGPWIID), 71 to 91 (TPTMGGLMVLSGLVVGTVLWA), 94 to 114 (LNPYVWIVLAVTLGFGFVGFY), 133 to 153 (WRLLIEAVIAAAACYALVRLG), 169 to 189 (VAINLGWFFVGFGAFIVVGAG), 200 to 220 (GLAIVPVMIAAASFGLISYLA), 240 to 260 (LSVLCGALLGAGLGFLWFNAP), 264 to 284 (IFMGDTGSLALGGMLGSIAVA), 289 to 309 (IVLAVIGGLFVLEAVSVIVQV), and 338 to 358 (QIVIRFWIIAVMLALAGLSTL).

The protein belongs to the glycosyltransferase 4 family. MraY subfamily. It depends on Mg(2+) as a cofactor.

The protein resides in the cell inner membrane. It carries out the reaction UDP-N-acetyl-alpha-D-muramoyl-L-alanyl-gamma-D-glutamyl-meso-2,6-diaminopimeloyl-D-alanyl-D-alanine + di-trans,octa-cis-undecaprenyl phosphate = di-trans,octa-cis-undecaprenyl diphospho-N-acetyl-alpha-D-muramoyl-L-alanyl-D-glutamyl-meso-2,6-diaminopimeloyl-D-alanyl-D-alanine + UMP. It participates in cell wall biogenesis; peptidoglycan biosynthesis. Its function is as follows. Catalyzes the initial step of the lipid cycle reactions in the biosynthesis of the cell wall peptidoglycan: transfers peptidoglycan precursor phospho-MurNAc-pentapeptide from UDP-MurNAc-pentapeptide onto the lipid carrier undecaprenyl phosphate, yielding undecaprenyl-pyrophosphoryl-MurNAc-pentapeptide, known as lipid I. The protein is Phospho-N-acetylmuramoyl-pentapeptide-transferase of Rhodopseudomonas palustris (strain BisB18).